The chain runs to 513 residues: MTAATISPSFNANVKQNKPPSFPSESSNRRPKTRDVASRYLGGTSSFFHQSSPKRCQSPIVTRPVTPSSVATNRPQSTPRRESLDRREVSKAERMLLTSGRSLFASFQADSFTPGTLERRKTTSSATISKSGGGKQEKLKLSDQWPRSLQPSCLSSRSVDFTDTRKKLIGSGNGVARALQDSMVSNRPVSRERITSVDLETESVSSGSSNGRGKMLPARGNVVKARVSQDRLEPSSHGLRKISVDSSVLSPKEANSLSSPRGTSIARGLSPSREVVPPRGVSPSDRMSPLRVRSSLSKNTPLIPHFAVDGKEKIRDNGVADAHLLRLLHSRLLQWQFANARANAVISSQKMREERRLYNAWRSISNLYNSVSMKRIEMQHLKQNLKLISILNMQMGHLEEWLVIDRNYMGSLVGAAEALKGSTLCLPVDCGAMVNVQSVKDAICSAVDVMQAMASSICLLLPKVGKISSLAAELGRVNAKDEGMLDVCRDLLNTISALQVTECSLRTQVTQLQ.

Polar residues-rich tracts occupy residues 1–26 (MTAA…PSES), 43–55 (GTSS…SPKR), and 65–78 (VTPS…PQST). 3 disordered regions span residues 1–89 (MTAA…RREV), 115–144 (GTLE…LSDQ), and 184–293 (VSNR…LRVR). Over residues 79–89 (PRRESLDRREV) the composition is skewed to basic and acidic residues. Polar residues-rich tracts occupy residues 202-211 (ESVSSGSSNG) and 244-262 (VDSS…SPRG). The QWRF motif signature appears at 334 to 337 (QWQF).

The protein belongs to the QWRF family.

The protein is QWRF motif-containing protein 9 (QWRF9) of Arabidopsis thaliana (Mouse-ear cress).